The chain runs to 245 residues: Uridylate kinase (245 aa).

Residue lysine 12–glycine 15 coordinates ATP. A UMP-binding site is contributed by glycine 55. Positions 56 and 60 each coordinate ATP. UMP is bound by residues aspartate 76 and alanine 137–threonine 144. Positions 164, 171, and 174 each coordinate ATP.

Belongs to the UMP kinase family. Homohexamer.

The protein resides in the cytoplasm. It carries out the reaction UMP + ATP = UDP + ADP. Its pathway is pyrimidine metabolism; CTP biosynthesis via de novo pathway; UDP from UMP (UMPK route): step 1/1. Inhibited by UTP. Its function is as follows. Catalyzes the reversible phosphorylation of UMP to UDP. The chain is Uridylate kinase from Chlamydia trachomatis serovar D (strain ATCC VR-885 / DSM 19411 / UW-3/Cx).